We begin with the raw amino-acid sequence, 115 residues long: UPF0127 protein PH1112 (115 aa).

This sequence belongs to the UPF0127 family.

This chain is UPF0127 protein PH1112, found in Pyrococcus horikoshii (strain ATCC 700860 / DSM 12428 / JCM 9974 / NBRC 100139 / OT-3).